Reading from the N-terminus, the 615-residue chain is (+)-alpha-pinene synthase TPS2, chloroplastic (615 aa).

A chloroplast-targeting transit peptide spans 1–55; it reads MHCMAVRHFAPSSSLSIFSSTNINNHFFGREIFTPKTSNITTKKSRSRPNCNPIQ. Residues arginine 330, aspartate 367, aspartate 371, arginine 509, and aspartate 512 each coordinate (2E)-geranyl diphosphate. The Mg(2+) site is built by aspartate 367 and aspartate 371. Positions 367–371 match the DDXXD motif motif; it reads DDIYD. 3 residues coordinate Mg(2+): aspartate 512, threonine 516, and glutamate 520.

It belongs to the terpene synthase family. Tpsb subfamily. Mg(2+) is required as a cofactor. It depends on Mn(2+) as a cofactor. The cofactor is K(+). In terms of tissue distribution, trichome.

It localises to the plastid. Its subcellular location is the chloroplast. The enzyme catalyses (2E)-geranyl diphosphate = (1R,5R)-alpha-pinene + diphosphate. It carries out the reaction (2E)-geranyl diphosphate = (1R,5R)-beta-pinene + diphosphate. It catalyses the reaction (2E)-geranyl diphosphate = (4S)-limonene + diphosphate. The catalysed reaction is (2E)-geranyl diphosphate = beta-myrcene + diphosphate. It participates in secondary metabolite biosynthesis; terpenoid biosynthesis. It functions in the pathway terpene metabolism; (-)-alpha-pinene biosynthesis; (-)-alpha-pinene from geranyl diphosphate: step 1/1. Functionally, involved in monoterpene (C10) olefins biosynthesis, constituants of cannabinoids and terpenoids-rich resins. Catalyzes mainly the conversion of (2E)-geranyl diphosphate to (+)-alpha-pinene, and also produces minor products such as (-)-limonene, (+)-beta-pinene and beta-myrcene. The protein is (+)-alpha-pinene synthase TPS2, chloroplastic of Cannabis sativa (Hemp).